A 452-amino-acid chain; its full sequence is RNA polymerase II-associated protein rba50 (452 aa).

3 disordered regions span residues 60–83, 125–202, and 223–261; these read LRKN…IDEE, EREL…QTKR, and PIKG…PLEF. Positions 125-135 are enriched in basic and acidic residues; that stretch reads ERELAQRKDRS. Over residues 136-154 the composition is skewed to polar residues; sequence SQVNTPDLSQRPSDDSFLS. Over residues 156 to 165 the composition is skewed to basic and acidic residues; sequence EKLRSSEKLN. The span at 170 to 191 shows a compositional bias: low complexity; it reads SVLSSEAVDSSSGSPSPPMALS.

The protein belongs to the RPAP1 family. Interacts with RNA polymerase II.

It localises to the cytoplasm. It is found in the nucleus. Functionally, forms an interface between the RNA polymerase II enzyme and chaperone/scaffolding proteins, suggesting that it is required to connect RNA polymerase II to regulators of protein complex formation. This Schizosaccharomyces pombe (strain 972 / ATCC 24843) (Fission yeast) protein is RNA polymerase II-associated protein rba50 (rba50).